A 124-amino-acid chain; its full sequence is Mini zinc finger protein 4 (124 aa).

The ZF-HD dimerization-type; degenerate zinc finger occupies 35–84; sequence YGECRRNHAARMGGHAVDGCREFLAEGEEGTGGALRCAACGCHRSFHRRV.

In terms of assembly, homo- and heterodimers.

The protein resides in the cytoplasm. Its function is as follows. Inhibits zinc finger homeodomain (ZHD) transcription factors, by interacting with them to prevent both their nuclear localization and their DNA-binding properties. In Oryza sativa subsp. japonica (Rice), this protein is Mini zinc finger protein 4 (MIF4).